The chain runs to 151 residues: Flagellar assembly factor FliW (151 aa).

It belongs to the FliW family. As to quaternary structure, interacts with translational regulator CsrA and flagellin(s).

It localises to the cytoplasm. In terms of biological role, acts as an anti-CsrA protein, binds CsrA and prevents it from repressing translation of its target genes, one of which is flagellin. Binds to flagellin and participates in the assembly of the flagellum. In Halalkalibacterium halodurans (strain ATCC BAA-125 / DSM 18197 / FERM 7344 / JCM 9153 / C-125) (Bacillus halodurans), this protein is Flagellar assembly factor FliW.